A 196-amino-acid polypeptide reads, in one-letter code: Alpha-crystallin A chain (196 aa).

The residue at position 1 (Met1) is an N-acetylmethionine. The required for complex formation with BFSP1 and BFSP2 stretch occupies residues 1 to 63 (MDVTIQHPWF…RTVLDSGISE (63 aa)). At Gln6 the chain carries Deamidated glutamine; partial. Ser45 is modified (phosphoserine). Gln50 carries the post-translational modification Deamidated glutamine; partial. A sHSP domain is found at 76-185 (HAGNPKNNPG…GHSERAIPVS (110 aa)). 2 positions are modified to N6-acetyllysine: Lys93 and Lys122. His123 is a binding site for Zn(2+). Asn124 bears the Deamidated asparagine; partial mark. Glu125 and His130 together coordinate Zn(2+). At Ser145 the chain carries Phosphoserine. The residue at position 146 (Asn146) is a Deamidated asparagine; partial. The disordered stretch occupies residues 168–196 (KVQSGLDAGHSERAIPVSREEKPSSAPSS). Position 170 is a deamidated glutamine; partial (Gln170). Residues 176–190 (GHSERAIPVSREEKP) show a composition bias toward basic and acidic residues. A Zn(2+)-binding site is contributed by His177. An O-linked (GlcNAc) serine glycan is attached at Ser185.

It belongs to the small heat shock protein (HSP20) family. As to quaternary structure, heteropolymer composed of three CRYAA and one CRYAB subunits. Inter-subunit bridging via zinc ions enhances stability, which is crucial as there is no protein turn over in the lens. Can also form homodimers and homotetramers (dimers of dimers) which serve as the building blocks of homooligomers. Within homooligomers, the zinc-binding motif is created from residues of 3 different molecules. His-123 and Glu-125 from one molecule are ligands of the zinc ion, and His-130 and His-177 residues from additional molecules complete the site with tetrahedral coordination geometry. Part of a complex required for lens intermediate filament formation composed of BFSP1, BFSP2 and CRYAA. Post-translationally, acetylation at Lys-93 may increase chaperone activity. Undergoes age-dependent proteolytical cleavage at the C-terminus. Cleavage by m-calpain produces specifically alpha-crystallin A(1-162), cleavage by Capn3/Lp82 produces specifically alpha-crystallin A(1-168) which is the major truncated form during normal maturation and induced cataract formation. In terms of tissue distribution, highly expressed in eye lens. Also expressed in non-lenticular tissues such as brain, spleen, liver, lung, skin, small intestine and a several epithelial and fibroblast cell lines with highest levels in spleen.

It is found in the cytoplasm. The protein localises to the nucleus. Its function is as follows. Contributes to the transparency and refractive index of the lens. Acts as a chaperone, preventing aggregation of various proteins under a wide range of stress conditions. Required for the correct formation of lens intermediate filaments as part of a complex composed of BFSP1, BFSP2 and CRYAA. Functionally, inhibits bacterial growth in the lens. In Rattus norvegicus (Rat), this protein is Alpha-crystallin A chain (Cryaa).